Consider the following 96-residue polypeptide: uncharacterized protein (96 aa).

This is an uncharacterized protein from Escherichia coli O157:H7.